The sequence spans 714 residues: MFKIKKKKLFIPIIILVLTAFLALIGYISIIFLGHYVIDEKKLILHASSKIVDQNGDEVASLYTENREPVSINEIPKQVREAFIAVEDKRFYEHHGIDAKSVGRAVYRDILAGGKVEGGSTITQQLAKNIFLTHDKTFLRKTKEVIIAINLERDYSKDKLLEMYLNQLYFGHGVYGIQAASHYYFNKEVKDLTVSEGAVLAAIPKAPSTYSPILHPDKNKERRDTILGMMNDQGYISAKEAVTAQGRTLGLHVKKQSETPWFDSYIDLVIKEAEDKYSISGEQLLQGGYTIKVPLDSKLQKTAYQVMKEGSYYPGTDQNAEGSAVFINNKTGGVEAAIGGRDYTSKGYNRVTAVRQPGSTFKPLAVYGPAMQEKKFKPYSLLKDELQSYGDYTPKNYDSRYEGEVTMSDAITYSKNAPAVWTLNEIGVETGKSYLKANGIDIPDEGLALALGGLEKGVSPLQLAGAFHTFAANGTYTEPFFISSIIDEDGETIADHKEEGKRVFSKQTSWNMTRMLQQVVKKGTATSGTYHGDLAGKTGSTSYTGVSGATKDAWFAGYTPKITGAVWMGYDKTDQNHYLKAGSSYPTRLFKDILTQAGETGHVFTKPKNVKELESPIELKPVKTLTADYTFKAAGLFTIELKWDAQEDDRAVYRIYVNKDGEETLLDSVEGKGSYEIPYANLFSGASYKIVPYNTQTKREGEGTDYVQPKLFSS.

At 1 to 12 (MFKIKKKKLFIP) the chain is on the cytoplasmic side. A helical; Signal-anchor for type II membrane protein transmembrane segment spans residues 13–33 (IIILVLTAFLALIGYISIIFL). The Extracellular segment spans residues 34–714 (GHYVIDEKKL…DYVQPKLFSS (681 aa)). Residues 49-217 (SKIVDQNGDE…STYSPILHPD (169 aa)) form a transglycosylase region. Residue Glu87 is the Proton donor; for transglycosylase activity of the active site. The segment at 297 to 592 (SKLQKTAYQV…SSYPTRLFKD (296 aa)) is transpeptidase. Ser359 serves as the catalytic Acyl-ester intermediate; for transpeptidase activity.

This sequence in the N-terminal section; belongs to the glycosyltransferase 51 family. It in the C-terminal section; belongs to the transpeptidase family.

Its subcellular location is the cell membrane. It catalyses the reaction [GlcNAc-(1-&gt;4)-Mur2Ac(oyl-L-Ala-gamma-D-Glu-L-Lys-D-Ala-D-Ala)](n)-di-trans,octa-cis-undecaprenyl diphosphate + beta-D-GlcNAc-(1-&gt;4)-Mur2Ac(oyl-L-Ala-gamma-D-Glu-L-Lys-D-Ala-D-Ala)-di-trans,octa-cis-undecaprenyl diphosphate = [GlcNAc-(1-&gt;4)-Mur2Ac(oyl-L-Ala-gamma-D-Glu-L-Lys-D-Ala-D-Ala)](n+1)-di-trans,octa-cis-undecaprenyl diphosphate + di-trans,octa-cis-undecaprenyl diphosphate + H(+). The enzyme catalyses Preferential cleavage: (Ac)2-L-Lys-D-Ala-|-D-Ala. Also transpeptidation of peptidyl-alanyl moieties that are N-acyl substituents of D-alanine.. It functions in the pathway cell wall biogenesis; peptidoglycan biosynthesis. Cell wall formation. May be involved in outgrowth of the germinated spore or it could function in the synthesis of the germ cell wall. This Bacillus subtilis (strain 168) protein is Penicillin-binding protein 1F (pbpF).